Here is a 1756-residue protein sequence, read N- to C-terminus: RANBP2-like and GRIP domain-containing protein 2 (1756 aa).

Phosphoserine is present on S21. 3 TPR repeats span residues 59-92 (PRAHRFLGLLYELEENTEKAVECYRRSLELNPPQ), 583-616 (QKMGRGLNSSYDQQEYIGRSVHYWKKVLPLLKII), and 647-680 (EDAHITFAILDAVHGNIEDAVTAFESIKSVVSYW). The disordered stretch occupies residues 759 to 804 (GPLYKNGSLRNADSEIKHSTPSPTKYSLSPSKSYKYSPKTPPRWAE). The segment covering 777–796 (STPSPTKYSLSPSKSYKYSP) has biased composition (low complexity). The region spanning 1029 to 1165 (HFEPVVQMPE…FEECQRLLLD (137 aa)) is the RanBD1 1 domain. Disordered regions lie at residues 1206 to 1241 (TKVTEEENKGSGTGAAGASDTTIKPNPENTGPTLEW) and 1299 to 1324 (AKLNQSGTSVGTDEESDVTQEEERDG). The span at 1228–1237 (IKPNPENTGP) shows a compositional bias: polar residues. Acidic residues predominate over residues 1310 to 1322 (TDEESDVTQEEER). Residues 1326–1462 (YFEPVVPLPD…FDEAKTAQEK (137 aa)) form the RanBD1 2 domain. Positions 1573–1586 (NDSETSSVAQSGSE) are enriched in polar residues. The segment at 1573-1614 (NDSETSSVAQSGSESKVEPKKCELSKNSDIEQSSDSKVKNLS) is disordered. Positions 1587–1610 (SKVEPKKCELSKNSDIEQSSDSKV) are enriched in basic and acidic residues. A GRIP domain is found at 1693–1743 (QEESAANVEHLKNVLLQFIFLKPGSERESLLPVINTMLQLSPEEKGKLAAV).

This chain is RANBP2-like and GRIP domain-containing protein 2 (RGPD2), found in Homo sapiens (Human).